The chain runs to 135 residues: CDGSH iron-sulfur domain-containing protein 2A (135 aa).

Residues 1–37 (MVLESIARVIKVQLPAYLKRLPIPDSIAGFIRLTVSE) are Lumenal-facing. The chain crosses the membrane as a helical span at residues 38–60 (WLRLLPFLGVLALLGYLAIRPFL). Topologically, residues 61 to 135 (LKKKQQKDSL…GPLILKKKEV (75 aa)) are cytoplasmic. [2Fe-2S] cluster-binding residues include cysteine 99, cysteine 101, cysteine 110, and histidine 114.

The protein belongs to the CISD protein family. CISD2 subfamily. Homodimer. [2Fe-2S] cluster serves as cofactor.

Its subcellular location is the endoplasmic reticulum membrane. The protein resides in the mitochondrion outer membrane. Its function is as follows. Regulator of autophagy that contributes to antagonize becn1-mediated cellular autophagy at the endoplasmic reticulum. Participates in the interaction of bcl2 with becn1 and is required for bcl2-mediated depression of endoplasmic reticulum Ca(2+) stores during autophagy. This chain is CDGSH iron-sulfur domain-containing protein 2A (cisd2-a), found in Xenopus laevis (African clawed frog).